Consider the following 114-residue polypeptide: Ribonuclease P protein component (114 aa).

This sequence belongs to the RnpA family. Consists of a catalytic RNA component (M1 or rnpB) and a protein subunit.

The enzyme catalyses Endonucleolytic cleavage of RNA, removing 5'-extranucleotides from tRNA precursor.. In terms of biological role, RNaseP catalyzes the removal of the 5'-leader sequence from pre-tRNA to produce the mature 5'-terminus. It can also cleave other RNA substrates such as 4.5S RNA. The protein component plays an auxiliary but essential role in vivo by binding to the 5'-leader sequence and broadening the substrate specificity of the ribozyme. This is Ribonuclease P protein component from Legionella pneumophila (strain Lens).